A 122-amino-acid chain; its full sequence is UPF0102 protein TTE1452 (122 aa).

Belongs to the UPF0102 family.

The polypeptide is UPF0102 protein TTE1452 (Caldanaerobacter subterraneus subsp. tengcongensis (strain DSM 15242 / JCM 11007 / NBRC 100824 / MB4) (Thermoanaerobacter tengcongensis)).